Here is a 297-residue protein sequence, read N- to C-terminus: Aspartate dehydrogenase domain-containing protein (297 aa).

Ser-24 and Ser-172 each carry phosphoserine.

This sequence belongs to the L-aspartate dehydrogenase family.

The chain is Aspartate dehydrogenase domain-containing protein from Rattus norvegicus (Rat).